Here is a 516-residue protein sequence, read N- to C-terminus: Maturase K (516 aa).

Belongs to the intron maturase 2 family. MatK subfamily.

The protein resides in the plastid. It is found in the chloroplast. Its function is as follows. Usually encoded in the trnK tRNA gene intron. Probably assists in splicing its own and other chloroplast group II introns. In Cypripedium calceolus (Yellow lady's slipper), this protein is Maturase K.